Here is a 564-residue protein sequence, read N- to C-terminus: M protein, serotype 12 (564 aa).

Positions 1–41 (MAKNTTNRHYSLRKLKTGTASVAVALTVVGAGLVAGQTVRA) are cleaved as a signal peptide. The stretch at 44–505 (SDLVAEKQRL…RAGKASDSQT (462 aa)) forms a coiled coil. C repeat units lie at residues 285–319 (KQLE…EAEL), 327–361 (AKVT…VEAA), 363–397 (KQLE…EKDL), and 405–439 (DKVK…EKAL). 2 disordered regions span residues 372–391 (SEAS…EAKK) and 404–438 (LDKV…VEKA). Basic and acidic residues-rich tracts occupy residues 404-413 (LDKVKEEKQI) and 421-438 (LRRD…VEKA). D repeat units follow at residues 472 to 477 (AKLEAE), 478 to 483 (AKALKE), 486 to 491 (AKQAEE), and 493 to 498 (AKLRAG). The interval 493-550 (AKLRAGKASDSQTPDAKPGNKAVPGKGQAPQAGTKPNQNKAPMKETKRQLPSTGETAN) is disordered. The short motif at 542–546 (LPSTG) is the LPXTG sorting signal element. T545 carries the post-translational modification Pentaglycyl murein peptidoglycan amidated threonine. Positions 546–564 (GETANPFFTAAALTVMAAA) are cleaved as a propeptide — removed by sortase.

The protein belongs to the M protein family.

The protein resides in the secreted. It localises to the cell wall. In terms of biological role, this protein is one of the different antigenic serotypes of protein M. Protein M is closely associated with virulence of the bacterium and can render the organism resistant to phagocytosis. The polypeptide is M protein, serotype 12 (emm12) (Streptococcus pyogenes).